The chain runs to 386 residues: Galactokinase (386 aa).

Residue 35 to 38 (EHTD) coordinates substrate. Residues Ser69 and 125–131 (GAGLSSS) each bind ATP. Residues Ser131 and Glu163 each contribute to the Mg(2+) site. The active-site Proton acceptor is Asp175. Residue Tyr224 coordinates substrate.

This sequence belongs to the GHMP kinase family. GalK subfamily.

The protein resides in the cytoplasm. The catalysed reaction is alpha-D-galactose + ATP = alpha-D-galactose 1-phosphate + ADP + H(+). It functions in the pathway carbohydrate metabolism; galactose metabolism. Functionally, catalyzes the transfer of the gamma-phosphate of ATP to D-galactose to form alpha-D-galactose-1-phosphate (Gal-1-P). This Vibrio vulnificus (strain CMCP6) protein is Galactokinase.